Consider the following 609-residue polypeptide: Tyrosyl-DNA phosphodiesterase 1 (609 aa).

A compositionally biased stretch (polar residues) spans 1–12 (MSQESSYGKWTI). A disordered region spans residues 1–155 (MSQESSYGKW…YETSGEGQDI (155 aa)). A Phosphoserine modification is found at S61. The segment covering 105–118 (QPKRVLPQEKKHVS) has biased composition (basic and acidic residues). Phosphoserine occurs at positions 119 and 132. T148 bears the Phosphothreonine mark. S149 is subject to Phosphoserine. The active-site Nucleophile is H264. A substrate-binding site is contributed by K266. Residues 401–404 (SIGS) form an interaction with DNA region. Catalysis depends on H494, which acts as the Proton donor/acceptor. K496 is a binding site for substrate.

It belongs to the tyrosyl-DNA phosphodiesterase family. As to quaternary structure, monomer. As to expression, ubiquitous.

It is found in the nucleus. It localises to the cytoplasm. DNA repair enzyme that can remove a variety of covalent adducts from DNA through hydrolysis of a 3'-phosphodiester bond, giving rise to DNA with a free 3' phosphate. Catalyzes the hydrolysis of dead-end complexes between DNA and the topoisomerase I active site tyrosine residue. Hydrolyzes 3'-phosphoglycolates on protruding 3' ends on DNA double-strand breaks due to DNA damage by radiation and free radicals. Acts on blunt-ended double-strand DNA breaks and on single-stranded DNA. Has low 3'exonuclease activity and can remove a single nucleoside from the 3'end of DNA and RNA molecules with 3'hydroxyl groups. Has no exonuclease activity towards DNA or RNA with a 3'phosphate. This Mus musculus (Mouse) protein is Tyrosyl-DNA phosphodiesterase 1 (Tdp1).